Here is a 146-residue protein sequence, read N- to C-terminus: Large ribosomal subunit protein uL13 (146 aa).

The protein belongs to the universal ribosomal protein uL13 family. As to quaternary structure, part of the 50S ribosomal subunit.

In terms of biological role, this protein is one of the early assembly proteins of the 50S ribosomal subunit, although it is not seen to bind rRNA by itself. It is important during the early stages of 50S assembly. The sequence is that of Large ribosomal subunit protein uL13 from Borreliella burgdorferi (strain ATCC 35210 / DSM 4680 / CIP 102532 / B31) (Borrelia burgdorferi).